The following is a 284-amino-acid chain: Protease HtpX homolog (284 aa).

2 consecutive transmembrane segments (helical) span residues 7–26 and 33–47; these read TYLL…MMLH and IILA…YYMS. Position 129 (H129) interacts with Zn(2+). E130 is an active-site residue. Residue H133 participates in Zn(2+) binding. A run of 2 helical transmembrane segments spans residues 148–168 and 180–200; these read LAGA…IFFV and IGTI…QFAI. E205 is a Zn(2+) binding site.

Belongs to the peptidase M48B family. Requires Zn(2+) as cofactor.

It localises to the cell membrane. The polypeptide is Protease HtpX homolog (Methanocaldococcus jannaschii (strain ATCC 43067 / DSM 2661 / JAL-1 / JCM 10045 / NBRC 100440) (Methanococcus jannaschii)).